Reading from the N-terminus, the 390-residue chain is RNA binding protein fox-1 homolog 2 (390 aa).

Residues 1–127 (MQNEPLTPGY…STPKRLHVSN (127 aa)) form a disordered region. Composition is skewed to polar residues over residues 18–28 (SQGNQEPTTTP) and 65–95 (GEHN…SLTT). His67 is modified (phosphothreonine). The segment covering 97–117 (GGAQTDGQQSQTQSSENSESK) has biased composition (low complexity). Residues 121–197 (KRLHVSNIPF…RKIEVNNATA (77 aa)) enclose the RRM domain. 5 positions are modified to omega-N-methylarginine: Gly249, Gly267, Phe268, Ala277, and Arg281. An asymmetric dimethylarginine mark is found at Arg297 and Arg329. Arg381 and Arg386 each carry asymmetric dimethylarginine; alternate. Residues Arg381 and Arg386 each carry the omega-N-methylarginine; alternate modification.

In terms of assembly, interacts with ER-alpha N-terminal activation domain. Interacts with RBPMS; the interaction allows cooperative assembly of stable cell-specific alternative splicing regulatory complexes.

The protein localises to the nucleus. It is found in the cytoplasm. Its function is as follows. RNA-binding protein that regulates alternative splicing events by binding to 5'-UGCAUGU-3' elements. Prevents binding of U2AF2 to the 3'-splice site. Regulates alternative splicing of tissue-specific exons and of differentially spliced exons during erythropoiesis. RNA-binding protein that seems to act as a coregulatory factor of ER-alpha. Together with RNA binding proteins RBPMS and MBNL1/2, activates vascular smooth muscle cells alternative splicing events. The chain is RNA binding protein fox-1 homolog 2 (RBFOX2) from Homo sapiens (Human).